Here is a 509-residue protein sequence, read N- to C-terminus: Maturase K (509 aa).

Belongs to the intron maturase 2 family. MatK subfamily.

Its subcellular location is the plastid. It is found in the chloroplast. In terms of biological role, usually encoded in the trnK tRNA gene intron. Probably assists in splicing its own and other chloroplast group II introns. This is Maturase K from Thuja occidentalis (Northern white-cedar).